The primary structure comprises 259 residues: Beta-glucanase (259 aa).

Positions 1-31 (MVKSKYLVFISVFSLLFGVFVVGFSHQGVKA) are cleaved as a signal peptide. Positions 35–255 (RPMGTAFYES…WVRYTPLQNY (221 aa)) constitute a GH16 domain. Glu-142 serves as the catalytic Nucleophile. Glu-146 functions as the Proton donor in the catalytic mechanism.

The protein belongs to the glycosyl hydrolase 16 family.

The enzyme catalyses Hydrolysis of (1-&gt;4)-beta-D-glucosidic linkages in beta-D-glucans containing (1-&gt;3)- and (1-&gt;4)-bonds.. Its function is as follows. Hydrolyzes B-glucans containing mixed beta-1,3 and beta-1,4 linkages. The protein is Beta-glucanase (bglBB) of Brevibacillus brevis (Bacillus brevis).